We begin with the raw amino-acid sequence, 166 residues long: Pyruvoyl-dependent arginine decarboxylase (166 aa).

S45 carries the post-translational modification Pyruvic acid (Ser).

Belongs to the PdaD family. Pyruvate is required as a cofactor.

It catalyses the reaction L-arginine + H(+) = agmatine + CO2. In Methanocella arvoryzae (strain DSM 22066 / NBRC 105507 / MRE50), this protein is Pyruvoyl-dependent arginine decarboxylase.